Here is a 73-residue protein sequence, read N- to C-terminus: Antimicrobial peptide TsAP-2 (73 aa).

An N-terminal signal peptide occupies residues 1 to 22 (MQIKHLITIFFLVLIVADHCHA). Lys39 bears the Lysine amide mark. The propeptide occupies 45-73 (EITSQIEQYRNLQKREAELENLLANLPVY).

Belongs to the non-disulfide-bridged peptide (NDBP) superfamily. Short antimicrobial peptide (group 4) family. Expressed by the venom gland.

The protein resides in the secreted. Functionally, antimicrobial peptide. Has a high antibacterial activity against the Gram-positive bacterium S.aureus (MIC=5-17.30 uM), the methicillin-resistant S.aureus (MRSA) (MIC=17.30 uM), and E.faecalis (MIC=69.23 uM). Has antifungal activity against Candida spp. and one Cryptococcus neoformans strains with MICs values ranging from 6.25 to 100 uM. Also shows an inhibitory activity on C.albicans biofilms at high concentrations. Has a moderate hemolytic potency (18% at 20 uM). Also inhibits the growth of the five human cancer cell lines tested (the squamous carcinoma cell line H157 (IC(50)=4.1 uM), the lung adenocarcinoma cell line H838 (11.0 uM), the breast carcinoma cell line MCF-7 (6.4 uM), the androgen-independent prostate adenocarcinoma cell line PC3 (13.3 uM) and the glioblastoma cell line U251-MG (15.4 uM)). In the model of polymicrobial sepsis, it exhibits an antibiotic effect, reducing the levels of microorganisms in the infectious focus and the inflammatory responses in the lung and cecum of septic animals. The protein is Antimicrobial peptide TsAP-2 of Tityus serrulatus (Brazilian scorpion).